The primary structure comprises 509 residues: MEEFQVYLELDRSQQHDFLYPLLFREYIYVLAHDHGLNSSMMSLEGGFYDNKSSSLSVKRLITRMYQRINLSIAANDSNQNPIFGHNNKLYSQIISEVFAAVVEIPFSLRLVAFLEGKEIEKSPNFQSIHSIFPFFEDKLSHLNYVLDVRIPYPICPEILVQTLREWVKDASSLHLLRFFLHEYFNSNSLITPKNSISVFLKSNPRLLLFLYNSHVYEYESILFFLCNQSSHLQSTSFQVLVERTYFYGKVEHLVEVFAKDFQDILGLVKDPFMHYVRYQGKSILASKDTPLLMNKWKYYLVGLWQWHFHASSQPGRVQLNHLYLGKYAINFLGYLSGVRLNSLLVRSQMLENSFLIDNSMKKVDTTVPIIHLIGSLTKARFCNALGHPISKSTWSDFSDSHLIDRFVRICRNLSHYYSGSSKKKSLYRVKYILRLSCVKSLVRKHKSTVRAFLKRLGSELLEEFLMEEEHVLALLFPRASSTSRRFYLYRGRIWYLDIFCINDLVNYQ.

Belongs to the intron maturase 2 family. MatK subfamily.

Its subcellular location is the plastid. It localises to the chloroplast. Its function is as follows. Usually encoded in the trnK tRNA gene intron. Probably assists in splicing its own and other chloroplast group II introns. This chain is Maturase K, found in Citrus sinensis (Sweet orange).